We begin with the raw amino-acid sequence, 211 residues long: MALTKSFLESRSTGELFALADELGLCLPEDLNRRLVIGEILDCYHSALDLNPPCAPQSLESKGTSCAYNTTEIHILARDPLWFFVFWDIHEQLFCTLTQSPQFRSFFLRVHSLGGHGWHTSLDHFDIDVPLKDRKRYVHLSLADDANRIDLCCKMLQRERILAQSRVVTLQRSVIERSLNPEDPTGAEVLSLCGLPLLEETYPSTSLPVCS.

This is an uncharacterized protein from Treponema pallidum (strain Nichols).